The chain runs to 146 residues: Large ribosomal subunit protein uL15 (146 aa).

The disordered stretch occupies residues 1–54; sequence MTLRLNELAPAEGAKREHRRLGRGIGSGVGKTGGRGIKGQKSRKSGGVRPGFEG. A compositionally biased stretch (gly residues) spans 23 to 37; that stretch reads RGIGSGVGKTGGRGI.

Belongs to the universal ribosomal protein uL15 family. Part of the 50S ribosomal subunit.

Functionally, binds to the 23S rRNA. This Acinetobacter baumannii (strain SDF) protein is Large ribosomal subunit protein uL15.